Here is a 162-residue protein sequence, read N- to C-terminus: Transcription elongation factor GreA (162 aa).

A coiled-coil region spans residues 9 to 38 (QGYKALEEELARLKSERPEIIQAIKEAREE).

Belongs to the GreA/GreB family.

Its function is as follows. Necessary for efficient RNA polymerase transcription elongation past template-encoded arresting sites. The arresting sites in DNA have the property of trapping a certain fraction of elongating RNA polymerases that pass through, resulting in locked ternary complexes. Cleavage of the nascent transcript by cleavage factors such as GreA or GreB allows the resumption of elongation from the new 3'terminus. GreA releases sequences of 2 to 3 nucleotides. This is Transcription elongation factor GreA from Desulfovibrio desulfuricans (strain ATCC 27774 / DSM 6949 / MB).